Reading from the N-terminus, the 233-residue chain is Esterase FUS5 (233 aa).

Catalysis depends on charge relay system residues serine 105, aspartate 159, and histidine 187.

Belongs to the LovG family.

Its function is as follows. Esterase; part of the gene cluster that mediates the biosynthesis of the mycotoxin fusarin C. Within the cluster, FUS1, FUS2, FUS8 and FUS9 are sufficient for fusarin production. The other FUS cluster members are not essential for fusarin C biosynthesis. The protein is Esterase FUS5 of Gibberella fujikuroi (strain CBS 195.34 / IMI 58289 / NRRL A-6831) (Bakanae and foot rot disease fungus).